The primary structure comprises 263 residues: Adaptin ear-binding coat-associated protein 2 (263 aa).

2 disordered regions span residues 167–191 (KKEG…LPPP) and 209–263 (GGSL…WVQF). S181 carries the phosphoserine modification. 2 consecutive short sequence motifs (WXXF motif) follow at residues 218-221 (GSGG) and 238-241 (DIWG). Residues 246–263 (STGSPSSQSQPGTGWVQF) show a composition bias toward low complexity.

It belongs to the NECAP family. In terms of assembly, interacts with AP1G1 and AP2A1 components of the adapter protein complexes AP-1 and AP-2. Interacts with the GAE domain proteins GGA1, GGA2 and GGA3. Expressed in brain, heart, kidney, liver and lung (at protein level).

It is found in the cytoplasmic vesicle. Its subcellular location is the clathrin-coated vesicle membrane. It localises to the cell membrane. Involved in endocytosis. This Rattus norvegicus (Rat) protein is Adaptin ear-binding coat-associated protein 2 (Necap2).